Consider the following 78-residue polypeptide: UPF0270 protein ECA4061 (78 aa).

It belongs to the UPF0270 family.

This Pectobacterium atrosepticum (strain SCRI 1043 / ATCC BAA-672) (Erwinia carotovora subsp. atroseptica) protein is UPF0270 protein ECA4061.